We begin with the raw amino-acid sequence, 208 residues long: Ribonuclease HII (208 aa).

Residues 12-201 form the RNase H type-2 domain; sequence ELVAGVDEVG…VRALLEPVAV (190 aa). Asp-18, Glu-19, and Asp-110 together coordinate a divalent metal cation.

It belongs to the RNase HII family. The cofactor is Mn(2+). It depends on Mg(2+) as a cofactor.

It localises to the cytoplasm. The catalysed reaction is Endonucleolytic cleavage to 5'-phosphomonoester.. In terms of biological role, endonuclease that specifically degrades the RNA of RNA-DNA hybrids. This is Ribonuclease HII from Ectopseudomonas mendocina (strain ymp) (Pseudomonas mendocina).